The sequence spans 284 residues: L-ribulose-5-phosphate 3-epimerase UlaE (284 aa).

Belongs to the L-ribulose-5-phosphate 3-epimerase family.

It catalyses the reaction L-ribulose 5-phosphate = L-xylulose 5-phosphate. It functions in the pathway cofactor degradation; L-ascorbate degradation; D-xylulose 5-phosphate from L-ascorbate: step 3/4. Catalyzes the isomerization of L-xylulose-5-phosphate to L-ribulose-5-phosphate. Is involved in the anaerobic L-ascorbate utilization. This is L-ribulose-5-phosphate 3-epimerase UlaE from Escherichia coli O45:K1 (strain S88 / ExPEC).